A 486-amino-acid polypeptide reads, in one-letter code: Shugoshin-1 (486 aa).

A coiled-coil region spans residues 71–154 (IEVSRVELQK…QNRAKILEKK (84 aa)). Disordered stretches follow at residues 137–163 (MSKT…CAPT), 187–209 (YTSC…RKSE), 222–251 (HSCR…ARLN), 323–346 (AGSS…PRKS), 382–403 (PIQH…DPGP), and 418–467 (TVAP…SRRA). Residues 331-346 (EAHKFDIEDPEPPRKS) show a composition bias toward basic and acidic residues. Basic residues predominate over residues 387-396 (QKRKLSRRKS). Polar residues predominate over residues 423–433 (APSSSNALIEQ).

The protein belongs to the shugoshin family. Highly expressed in roots. Expressed in panicles. Expressed at low levels in leaves.

The protein resides in the nucleus. It localises to the nucleolus. The protein localises to the chromosome. It is found in the centromere. Functionally, plays a central role in chromosome cohesion during meiosis I by preventing premature dissociation of cohesin complex from centromeres after prophase, when most of cohesin complex dissociates from chromosomes arms. Required for the timely assembly and maintenance of synaptonemal complex (SC) during early prophase I. Required for maintenance of centromeric cohesion before prophase II and correct segregation of chromatids during meiosis II. Has apparently no function in mitosis. The polypeptide is Shugoshin-1 (Oryza sativa subsp. japonica (Rice)).